The primary structure comprises 277 residues: UPF0496 protein At3g48650 (277 aa).

2 helical membrane passes run 124-144 and 145-165; these read YIFF…LGAV and SLVV…APLW.

Belongs to the UPF0496 family.

It is found in the membrane. The sequence is that of UPF0496 protein At3g48650 from Arabidopsis thaliana (Mouse-ear cress).